A 367-amino-acid polypeptide reads, in one-letter code: tRNA/tmRNA (uracil-C(5))-methyltransferase (367 aa).

S-adenosyl-L-methionine contacts are provided by Q189, Y217, N222, E238, and D298. C323 functions as the Nucleophile in the catalytic mechanism. Residue E357 is the Proton acceptor of the active site.

This sequence belongs to the class I-like SAM-binding methyltransferase superfamily. RNA M5U methyltransferase family. TrmA subfamily.

It catalyses the reaction uridine(54) in tRNA + S-adenosyl-L-methionine = 5-methyluridine(54) in tRNA + S-adenosyl-L-homocysteine + H(+). The catalysed reaction is uridine(341) in tmRNA + S-adenosyl-L-methionine = 5-methyluridine(341) in tmRNA + S-adenosyl-L-homocysteine + H(+). Dual-specificity methyltransferase that catalyzes the formation of 5-methyluridine at position 54 (m5U54) in all tRNAs, and that of position 341 (m5U341) in tmRNA (transfer-mRNA). The chain is tRNA/tmRNA (uracil-C(5))-methyltransferase from Pseudoalteromonas translucida (strain TAC 125).